The primary structure comprises 320 residues: Cytochrome f (320 aa).

A signal peptide spans 1-35 (MQTRKTFSWIKEQITRSISASLMIYIITRTSISSA). Residues Y36, C56, C59, and H60 each coordinate heme. Residues 286-306 (VQGLLFFLASVILAQIFLVLK) form a helical membrane-spanning segment.

The protein belongs to the cytochrome f family. In terms of assembly, the 4 large subunits of the cytochrome b6-f complex are cytochrome b6, subunit IV (17 kDa polypeptide, petD), cytochrome f and the Rieske protein, while the 4 small subunits are PetG, PetL, PetM and PetN. The complex functions as a dimer. The cofactor is heme.

It is found in the plastid. It localises to the chloroplast thylakoid membrane. In terms of biological role, component of the cytochrome b6-f complex, which mediates electron transfer between photosystem II (PSII) and photosystem I (PSI), cyclic electron flow around PSI, and state transitions. In Panax ginseng (Korean ginseng), this protein is Cytochrome f.